The chain runs to 552 residues: Dihydroxy-acid dehydratase (552 aa).

Asp78 is a Mg(2+) binding site. Residue Cys119 participates in [2Fe-2S] cluster binding. Positions 120 and 121 each coordinate Mg(2+). At Lys121 the chain carries N6-carboxylysine. Residue Cys190 participates in [2Fe-2S] cluster binding. Glu441 is a binding site for Mg(2+). Ser467 acts as the Proton acceptor in catalysis.

This sequence belongs to the IlvD/Edd family. In terms of assembly, homodimer. [2Fe-2S] cluster is required as a cofactor. It depends on Mg(2+) as a cofactor.

The enzyme catalyses (2R)-2,3-dihydroxy-3-methylbutanoate = 3-methyl-2-oxobutanoate + H2O. It catalyses the reaction (2R,3R)-2,3-dihydroxy-3-methylpentanoate = (S)-3-methyl-2-oxopentanoate + H2O. It functions in the pathway amino-acid biosynthesis; L-isoleucine biosynthesis; L-isoleucine from 2-oxobutanoate: step 3/4. The protein operates within amino-acid biosynthesis; L-valine biosynthesis; L-valine from pyruvate: step 3/4. Functionally, functions in the biosynthesis of branched-chain amino acids. Catalyzes the dehydration of (2R,3R)-2,3-dihydroxy-3-methylpentanoate (2,3-dihydroxy-3-methylvalerate) into 2-oxo-3-methylpentanoate (2-oxo-3-methylvalerate) and of (2R)-2,3-dihydroxy-3-methylbutanoate (2,3-dihydroxyisovalerate) into 2-oxo-3-methylbutanoate (2-oxoisovalerate), the penultimate precursor to L-isoleucine and L-valine, respectively. The polypeptide is Dihydroxy-acid dehydratase (Ignicoccus hospitalis (strain KIN4/I / DSM 18386 / JCM 14125)).